Reading from the N-terminus, the 432-residue chain is Trigger factor (432 aa).

One can recognise a PPIase FKBP-type domain in the interval 161–246 (DDRVTIDFVG…LKKIENMVLP (86 aa)).

It belongs to the FKBP-type PPIase family. Tig subfamily.

The protein resides in the cytoplasm. It carries out the reaction [protein]-peptidylproline (omega=180) = [protein]-peptidylproline (omega=0). Involved in protein export. Acts as a chaperone by maintaining the newly synthesized protein in an open conformation. Functions as a peptidyl-prolyl cis-trans isomerase. The protein is Trigger factor of Haemophilus influenzae (strain PittEE).